Here is a 314-residue protein sequence, read N- to C-terminus: 4-hydroxy-3-methylbut-2-enyl diphosphate reductase (314 aa).

Cysteine 12 serves as a coordination point for [4Fe-4S] cluster. Residues histidine 43 and histidine 81 each contribute to the (2E)-4-hydroxy-3-methylbut-2-enyl diphosphate site. Dimethylallyl diphosphate-binding residues include histidine 43 and histidine 81. Positions 43 and 81 each coordinate isopentenyl diphosphate. Cysteine 103 contributes to the [4Fe-4S] cluster binding site. Histidine 131 serves as a coordination point for (2E)-4-hydroxy-3-methylbut-2-enyl diphosphate. Histidine 131 contacts dimethylallyl diphosphate. Residue histidine 131 participates in isopentenyl diphosphate binding. Glutamate 133 serves as the catalytic Proton donor. A (2E)-4-hydroxy-3-methylbut-2-enyl diphosphate-binding site is contributed by threonine 170. [4Fe-4S] cluster is bound at residue cysteine 198. (2E)-4-hydroxy-3-methylbut-2-enyl diphosphate contacts are provided by serine 226, asparagine 228, and serine 271. Positions 226, 228, and 271 each coordinate dimethylallyl diphosphate. Residues serine 226, asparagine 228, and serine 271 each contribute to the isopentenyl diphosphate site.

Belongs to the IspH family. [4Fe-4S] cluster is required as a cofactor.

It catalyses the reaction isopentenyl diphosphate + 2 oxidized [2Fe-2S]-[ferredoxin] + H2O = (2E)-4-hydroxy-3-methylbut-2-enyl diphosphate + 2 reduced [2Fe-2S]-[ferredoxin] + 2 H(+). The enzyme catalyses dimethylallyl diphosphate + 2 oxidized [2Fe-2S]-[ferredoxin] + H2O = (2E)-4-hydroxy-3-methylbut-2-enyl diphosphate + 2 reduced [2Fe-2S]-[ferredoxin] + 2 H(+). The protein operates within isoprenoid biosynthesis; dimethylallyl diphosphate biosynthesis; dimethylallyl diphosphate from (2E)-4-hydroxy-3-methylbutenyl diphosphate: step 1/1. Its pathway is isoprenoid biosynthesis; isopentenyl diphosphate biosynthesis via DXP pathway; isopentenyl diphosphate from 1-deoxy-D-xylulose 5-phosphate: step 6/6. Its function is as follows. Catalyzes the conversion of 1-hydroxy-2-methyl-2-(E)-butenyl 4-diphosphate (HMBPP) into a mixture of isopentenyl diphosphate (IPP) and dimethylallyl diphosphate (DMAPP). Acts in the terminal step of the DOXP/MEP pathway for isoprenoid precursor biosynthesis. This Halalkalibacterium halodurans (strain ATCC BAA-125 / DSM 18197 / FERM 7344 / JCM 9153 / C-125) (Bacillus halodurans) protein is 4-hydroxy-3-methylbut-2-enyl diphosphate reductase.